A 438-amino-acid polypeptide reads, in one-letter code: Indole diterpene prenyltransferase paxD (438 aa).

80-81 (FM) provides a ligand contact to L-tryptophan. Residues Arg-102, Lys-190, Arg-264, Lys-266, Tyr-268, Tyr-349, and Tyr-418 each contribute to the substrate site.

This sequence belongs to the tryptophan dimethylallyltransferase family.

It functions in the pathway secondary metabolite biosynthesis. In terms of biological role, indole diterpene prenyltransferase; part of the gene cluster that mediates the biosynthesis of paxilline, a mycotoxin that acts as an inhibitor of mammalian maxi-K channels. PaxG, the geranylgeranyl diphosphate (GGPP) synthase is proposed to catalyze the first step in paxilline biosynthesis. Condensation of indole-3-glycerol phosphate with GGPP by paxC then forms 3-geranylgeranylindole (3-GGI), followed by epoxidation and cyclization of this intermediate (by paxM and paxB) to form paspaline. Paspaline is subsequently converted to 13-desoxypaxilline by paxP, the latter being then converted to paxilline by paxQ. Finally paxilline can be mono- and di-prenylated by paxD. This chain is Indole diterpene prenyltransferase paxD, found in Penicillium paxilli.